Consider the following 360-residue polypeptide: Putative transport protein BU123 (360 aa).

The next 9 helical transmembrane spans lie at 18 to 38 (IFIV…ILGF), 39 to 59 (FWAS…QKIL), 66 to 86 (AVII…FFLV), 161 to 181 (GLFI…YWNG), 204 to 224 (LLLA…TALI), 230 to 250 (GIGL…IIFF), 251 to 271 (SCLI…WLYW), 280 to 300 (ILLI…PFFI), and 316 to 336 (IGGL…VLVI).

This sequence belongs to the autoinducer-2 exporter (AI-2E) (TC 2.A.86) family.

It is found in the cell membrane. The polypeptide is Putative transport protein BU123 (Buchnera aphidicola subsp. Acyrthosiphon pisum (strain APS) (Acyrthosiphon pisum symbiotic bacterium)).